The primary structure comprises 795 residues: Phenylalanine--tRNA ligase beta subunit (795 aa).

Positions 39–148 constitute a tRNA-binding domain; sequence AGSFNGVVVG…ADAPLGTDIR (110 aa). The region spanning 401 to 476 is the B5 domain; that stretch reads PKRATITLRR…RVYGYNNIPD (76 aa). Mg(2+) contacts are provided by Asp454, Asp460, Glu463, and Glu464. One can recognise an FDX-ACB domain in the interval 701–794; it reads SRFPANRRDI…LKERFQASLR (94 aa).

This sequence belongs to the phenylalanyl-tRNA synthetase beta subunit family. Type 1 subfamily. In terms of assembly, tetramer of two alpha and two beta subunits. Requires Mg(2+) as cofactor.

It is found in the cytoplasm. It catalyses the reaction tRNA(Phe) + L-phenylalanine + ATP = L-phenylalanyl-tRNA(Phe) + AMP + diphosphate + H(+). The protein is Phenylalanine--tRNA ligase beta subunit of Salmonella paratyphi A (strain ATCC 9150 / SARB42).